Here is a 399-residue protein sequence, read N- to C-terminus: Unsaturated chondroitin disaccharide hydrolase (399 aa).

Asp116 acts as the Nucleophile in catalysis. Residues Asp116, Asp176, Gly234, Thr236, Arg248, Trp252, Ser366, and Ser369 each coordinate substrate. The active-site Proton donor is Asp176.

The protein belongs to the glycosyl hydrolase 88 family. In terms of assembly, monomer.

It catalyses the reaction beta-D-4-deoxy-Delta(4)-GlcpA-(1-&gt;3)-beta-D-GalpNAc6S + H2O = N-acetyl-beta-D-galactosamine 6-sulfate + 5-dehydro-4-deoxy-D-glucuronate. Functionally, catalyzes the hydrolysis of unsaturated hyaluronate and chondroitin disaccharides. Also degrades unsaturated heparin disaccharides. Releases 4-deoxy-4,5-didehydro D-glucuronic acid or 4-deoxy-4,5-didehydro L-iduronic acid from chondroitin disaccharides, hyaluronan disaccharides and heparin disaccharides and cleaves both glycosidic (1-&gt;3) and (1-&gt;4) bonds. Prefers sulfated glycosaminoglycans compared to unsulfated glycosaminoglycans. Probably required for mammalian cells invasion through the degradation of extracellular sulfated glycosaminoglycans such as chondroitin and hyaluronan. This is Unsaturated chondroitin disaccharide hydrolase (ugl) from Streptococcus pyogenes serotype M1.